The sequence spans 152 residues: Nucleoside diphosphate kinase A (152 aa).

The ATP site is built by K12, F60, R88, and T94. K100 participates in a covalent cross-link: Glycyl lysine isopeptide (Lys-Gly) (interchain with G-Cter in ubiquitin). Residues R105 and N115 each contribute to the ATP site. The active-site Pros-phosphohistidine intermediate is H118. Phosphoserine is present on residues S120, S122, and S125.

This sequence belongs to the NDK family. As to quaternary structure, hexamer of two different chains: An and B (A6, A5B, A4B2, A3B3, A2B4, AB5, B6). Interacts with PRUNE1. Component of the SET complex, composed of at least ANP32A, APEX1, HMGB2, NME1, SET and TREX1. Within this complex, interacts directly with SET. Also interacts with TREX1, but only following translocation to the nucleus. Mg(2+) is required as a cofactor.

The protein resides in the cytoplasm. It localises to the nucleus. The enzyme catalyses a 2'-deoxyribonucleoside 5'-diphosphate + ATP = a 2'-deoxyribonucleoside 5'-triphosphate + ADP. It carries out the reaction a ribonucleoside 5'-diphosphate + ATP = a ribonucleoside 5'-triphosphate + ADP. Autophosphorylation at His-118 increases serine/threonine protein kinase activity of the enzyme. Interaction with the SET complex inhibits exonuclease activity. Major role in the synthesis of nucleoside triphosphates other than ATP. The ATP gamma phosphate is transferred to the NDP beta phosphate via a ping-pong mechanism, using a phosphorylated active-site intermediate. Possesses nucleoside-diphosphate kinase, serine/threonine-specific protein kinase, geranyl and farnesyl pyrophosphate kinase, histidine protein kinase and 3'-5' exonuclease activities. Involved in cell proliferation, differentiation and development, signal transduction, G protein-coupled receptor endocytosis, and gene expression. Required for neural development including neural patterning and cell fate determination. During GZMA-mediated cell death, works in concert with TREX1. NME1 nicks one strand of DNA and TREX1 removes bases from the free 3' end to enhance DNA damage and prevent DNA end reannealing and rapid repair. This is Nucleoside diphosphate kinase A (NME1) from Canis lupus familiaris (Dog).